We begin with the raw amino-acid sequence, 234 residues long: Toxic shock syndrome toxin-1 (234 aa).

A signal peptide spans 1-40 (MNKKLLMNFFIVSPLLLATTATDFTPVPLSSNQIIKTAKA).

This sequence belongs to the staphylococcal/streptococcal toxin family.

It localises to the secreted. Functionally, responsible for the symptoms of toxic shock syndrome. The chain is Toxic shock syndrome toxin-1 (tst) from Staphylococcus aureus.